The sequence spans 167 residues: S-ribosylhomocysteine lyase (167 aa).

The Fe cation site is built by H54, H58, and C128.

It belongs to the LuxS family. In terms of assembly, homodimer. Fe cation serves as cofactor.

The catalysed reaction is S-(5-deoxy-D-ribos-5-yl)-L-homocysteine = (S)-4,5-dihydroxypentane-2,3-dione + L-homocysteine. Involved in the synthesis of autoinducer 2 (AI-2) which is secreted by bacteria and is used to communicate both the cell density and the metabolic potential of the environment. The regulation of gene expression in response to changes in cell density is called quorum sensing. Catalyzes the transformation of S-ribosylhomocysteine (RHC) to homocysteine (HC) and 4,5-dihydroxy-2,3-pentadione (DPD). This chain is S-ribosylhomocysteine lyase, found in Haemophilus influenzae (strain PittGG).